The primary structure comprises 147 residues: Hemoglobin subunit epsilon (147 aa).

Residues 3–147 (HFTAEEKVAI…VAIALGHKYH (145 aa)) enclose the Globin domain. S14 and S51 each carry phosphoserine. Heme b is bound by residues H64 and H93.

The protein belongs to the globin family. In terms of assembly, heterotetramer of two alpha chains and two epsilon chains in early embryonic hemoglobin Gower-2; two zeta chains and two epsilon chains in early embryonic hemoglobin Gower-1. Red blood cells.

In terms of biological role, the epsilon chain is a beta-type chain of early mammalian embryonic hemoglobin. The chain is Hemoglobin subunit epsilon (HBE1) from Cebus kaapori (Ka'apor capuchin).